Consider the following 61-residue polypeptide: Small ribosomal subunit protein uS14 (61 aa).

The Zn(2+) site is built by cysteine 24, cysteine 27, cysteine 40, and cysteine 43.

Belongs to the universal ribosomal protein uS14 family. Zinc-binding uS14 subfamily. Part of the 30S ribosomal subunit. Contacts proteins S3 and S10. Zn(2+) serves as cofactor.

In terms of biological role, binds 16S rRNA, required for the assembly of 30S particles and may also be responsible for determining the conformation of the 16S rRNA at the A site. The polypeptide is Small ribosomal subunit protein uS14 (Borrelia hermsii (strain HS1 / DAH)).